A 298-amino-acid chain; its full sequence is Ethanolamine ammonia-lyase small subunit (298 aa).

Adenosylcob(III)alamin contacts are provided by Val210, Glu231, and Cys261.

Belongs to the EutC family. In terms of assembly, the basic unit is a heterodimer which dimerizes to form tetramers. The heterotetramers trimerize; 6 large subunits form a core ring with 6 small subunits projecting outwards. Adenosylcob(III)alamin is required as a cofactor.

It localises to the bacterial microcompartment. It catalyses the reaction ethanolamine = acetaldehyde + NH4(+). The protein operates within amine and polyamine degradation; ethanolamine degradation. Catalyzes the deamination of various vicinal amino-alcohols to oxo compounds. Allows this organism to utilize ethanolamine as the sole source of nitrogen and carbon in the presence of external vitamin B12. The polypeptide is Ethanolamine ammonia-lyase small subunit (Salmonella agona (strain SL483)).